Consider the following 278-residue polypeptide: Envelope glycoprotein L (278 aa).

The signal sequence occupies residues 1 to 30 (MCRRPDCGFSFSPGPVILLWCCLLLPIVSS). Positions 43–256 (VPAECPELTR…DKYYAGLPPE (214 aa)) constitute a gL betaherpesvirus-type domain. Cysteine 154 and cysteine 159 are joined by a disulfide.

Belongs to the herpesviridae glycoprotein L (gL) family. Betaherpesvirinae gL subfamily. Interacts with glycoprotein H (gH); this interaction is necessary for the correct processing and cell surface expression of gH. Forms the envelope pentamer complex (PC) composed of gH, gL, UL128, UL130, and UL131A. The pentamer interacts with host NRP2. Forms the envelope trimer complex composed of gH, gL, and gO. The trimer interacts with host PDGFRA. The trimer also interacts with host EPHA2.

Its subcellular location is the virion membrane. It localises to the host cell membrane. It is found in the host Golgi apparatus. The protein localises to the host trans-Golgi network. Its function is as follows. The heterodimer glycoprotein H-glycoprotein L is required for the fusion of viral and plasma membranes leading to virus entry into the host cell. Acts as a functional inhibitor of gH and maintains gH in an inhibited form. Upon binding to host integrins, gL dissociates from gH leading to activation of the viral fusion glycoproteins gB and gH. In human cytomegalovirus, forms two distincts complexes to mediate viral entry, a trimer and a pentamer at the surface of the virion envelope. The gH-gL-gO trimer is required for infection in fibroblasts by interacting with host PDGFRA, and in glioblastoma cells by interacting with host EPHA2. The gH-gL-UL128-UL130-UL131A pentamer is essential for viral entry in epithelial, endothelial and myeloid cells via interaction with host NRP2. The chain is Envelope glycoprotein L from Homo sapiens (Human).